We begin with the raw amino-acid sequence, 658 residues long: ATP-dependent zinc metalloprotease FtsH 4 (658 aa).

The segment at 1-22 is disordered; the sequence is MREPTNRQGSPGPGEPRPPAQG. Residues 1–28 are Cytoplasmic-facing; the sequence is MREPTNRQGSPGPGEPRPPAQGRPRFPT. The helical transmembrane segment at 29-49 threads the bilayer; it reads WILWVALLALALWNVYTFFWP. Topologically, residues 50–149 are extracellular; that stretch reads SSGARLNIPY…TVKIDQAGGS (100 aa). The interval 95 to 114 is disordered; the sequence is QVLSPGDPVPPGTSPNEIRT. A helical membrane pass occupies residues 150 to 170; it reads VWPSLLATIVPLFLFIGLMVY. The Cytoplasmic portion of the chain corresponds to 171 to 658; it reads LGRSMSRGQQ…AAPAAAADSV (488 aa). Residue 243–250 participates in ATP binding; that stretch reads GPPGTGKT. Residue histidine 464 participates in Zn(2+) binding. Glutamate 465 is an active-site residue. 2 residues coordinate Zn(2+): histidine 468 and aspartate 540.

This sequence in the central section; belongs to the AAA ATPase family. In the C-terminal section; belongs to the peptidase M41 family. Homohexamer. Zn(2+) is required as a cofactor.

It localises to the cell membrane. Functionally, acts as a processive, ATP-dependent zinc metallopeptidase for both cytoplasmic and membrane proteins. Plays a role in the quality control of integral membrane proteins. This Sphaerobacter thermophilus (strain ATCC 49802 / DSM 20745 / KCCM 41009 / NCIMB 13125 / S 6022) protein is ATP-dependent zinc metalloprotease FtsH 4 (ftsh4).